Here is a 217-residue protein sequence, read N- to C-terminus: Probable GTP-binding protein EngB (217 aa).

One can recognise an EngB-type G domain in the interval 27-201; it reads GGVEIAFAGR…AQTLSGWYLA (175 aa). Residues 35-42, 62-66, 80-83, 147-150, and 180-182 each bind GTP; these read GRSNAGKS, GRTQL, DLPG, TKAD, and FSS. Positions 42 and 64 each coordinate Mg(2+).

This sequence belongs to the TRAFAC class TrmE-Era-EngA-EngB-Septin-like GTPase superfamily. EngB GTPase family. It depends on Mg(2+) as a cofactor.

Its function is as follows. Necessary for normal cell division and for the maintenance of normal septation. The protein is Probable GTP-binding protein EngB of Aeromonas salmonicida (strain A449).